Consider the following 446-residue polypeptide: Phosphoglucosamine mutase (446 aa).

The Phosphoserine intermediate role is filled by serine 102. Residues serine 102, aspartate 239, aspartate 241, and aspartate 243 each coordinate Mg(2+). Residue serine 102 is modified to Phosphoserine.

Belongs to the phosphohexose mutase family. It depends on Mg(2+) as a cofactor. In terms of processing, activated by phosphorylation.

It carries out the reaction alpha-D-glucosamine 1-phosphate = D-glucosamine 6-phosphate. Functionally, catalyzes the conversion of glucosamine-6-phosphate to glucosamine-1-phosphate. The polypeptide is Phosphoglucosamine mutase (Solibacter usitatus (strain Ellin6076)).